An 821-amino-acid chain; its full sequence is Bifunctional dethiobiotin synthetase/7,8-diamino-pelargonic acid aminotransferase, mitochondrial (821 aa).

Positions Ser28 to Asp283 are dethiobiotin synthetase. Gly39–Leu44 contributes to the ATP binding site. Thr43 is a binding site for Mg(2+). Thr72 contributes to the substrate binding site. Glu194 is a Mg(2+) binding site. Residue Glu194 to Gly197 participates in ATP binding. Residues Arg316–Leu820 are 7,8-diamino-pelargonic acid aminotransferase. Trp374 to Trp375 provides a ligand contact to (8S)-8-amino-7-oxononanoate. Gly436–Ser437 contacts pyridoxal 5'-phosphate. Tyr482 contacts (8S)-8-amino-7-oxononanoate. Asp626 serves as a coordination point for pyridoxal 5'-phosphate. Lys655 and Gly689 together coordinate (8S)-8-amino-7-oxononanoate. The residue at position 655 (Lys655) is an N6-(pyridoxal phosphate)lysine. Residue Ser691 coordinates pyridoxal 5'-phosphate. Residue Arg787 coordinates (8S)-8-amino-7-oxononanoate.

The protein in the N-terminal section; belongs to the dethiobiotin synthetase family. In the C-terminal section; belongs to the class-III pyridoxal-phosphate-dependent aminotransferase family. BioA subfamily. Mg(2+) serves as cofactor. It depends on pyridoxal 5'-phosphate as a cofactor.

Its subcellular location is the mitochondrion. It catalyses the reaction (7R,8S)-7,8-diammoniononanoate + CO2 + ATP = (4R,5S)-dethiobiotin + ADP + phosphate + 3 H(+). It carries out the reaction (8S)-8-amino-7-oxononanoate + S-adenosyl-L-methionine = S-adenosyl-4-methylsulfanyl-2-oxobutanoate + (7R,8S)-7,8-diammoniononanoate. The protein operates within cofactor biosynthesis; biotin biosynthesis; biotin from 7,8-diaminononanoate: step 1/2. It participates in cofactor biosynthesis; biotin biosynthesis; 7,8-diaminononanoate from 8-amino-7-oxononanoate (SAM route): step 1/1. Its function is as follows. Bifunctional enzyme that catalyzes two different reactions involved in the biotin biosynthesis. Catalyzes a mechanistically unusual reaction, the ATP-dependent insertion of CO2 between the N7 and N8 nitrogen atoms of 7,8-diaminopelargonic acid (DAPA) to form an ureido ring. In terms of biological role, catalyzes the transfer of the alpha-amino group from S-adenosyl-L-methionine (SAM) to 7-keto-8-aminopelargonic acid (KAPA) to form 7,8-diaminopelargonic acid (DAPA). It is the only aminotransferase known to utilize SAM as an amino donor. This is Bifunctional dethiobiotin synthetase/7,8-diamino-pelargonic acid aminotransferase, mitochondrial (BIO3-BIO1) from Oryza sativa subsp. japonica (Rice).